Here is a 169-residue protein sequence, read N- to C-terminus: Der GTPase-activating protein YihI (169 aa).

Disordered stretches follow at residues 1 to 92 (MKPS…EKPM) and 146 to 169 (SYDDDEEEEEDEKQEDMMRLLRGN). The span at 10–19 (SKGHAKARRK) shows a compositional bias: basic residues. Over residues 20 to 30 (TREELDQEARD) the composition is skewed to basic and acidic residues. The span at 31 to 40 (RKRQKKRRGH) shows a compositional bias: basic residues. Polar residues predominate over residues 49–58 (GNTTSGSKGQ). Over residues 147-159 (YDDDEEEEEDEKQ) the composition is skewed to acidic residues. Basic and acidic residues predominate over residues 160–169 (EDMMRLLRGN).

This sequence belongs to the YihI family. In terms of assembly, interacts with Der.

Its function is as follows. A GTPase-activating protein (GAP) that modifies Der/EngA GTPase function. May play a role in ribosome biogenesis. The protein is Der GTPase-activating protein YihI of Escherichia coli O1:K1 / APEC.